The following is a 306-amino-acid chain: 17-beta-hydroxysteroid dehydrogenase type 3 (306 aa).

44–73 (GQWAVITGAGDGIGKAYSFELARHGLNVVL) contributes to the NADP(+) binding site. Residue S181 participates in substrate binding. Catalysis depends on Y194, which acts as the Proton acceptor.

The protein belongs to the short-chain dehydrogenases/reductases (SDR) family. 17-beta-HSD 3 subfamily.

It is found in the endoplasmic reticulum. The catalysed reaction is a 17beta-hydroxy steroid + NADP(+) = a 17-oxo steroid + NADPH + H(+). It catalyses the reaction testosterone + NADP(+) = androst-4-ene-3,17-dione + NADPH + H(+). It carries out the reaction 17beta-estradiol + NADP(+) = estrone + NADPH + H(+). The enzyme catalyses 3beta-hydroxyandrost-5-en-17-one + NADPH + H(+) = androst-5-en-3beta,17beta-diol + NADP(+). The catalysed reaction is 17beta-hydroxy-5alpha-androstan-3-one + NADP(+) = 5alpha-androstan-3,17-dione + NADPH + H(+). It catalyses the reaction androsterone + NADPH + H(+) = 5alpha-androstane-3alpha,17beta-diol + NADP(+). It carries out the reaction 3beta-hydroxy-5alpha-androstan-17-one + NADPH + H(+) = 5alpha-androstane-3beta,17beta-diol + NADP(+). The enzyme catalyses androst-4-ene-3,11,17-trione + NADPH + H(+) = 17beta-hydroxyandrost-4-ene-3,11-dione + NADP(+). The catalysed reaction is 11beta-hydroxyandrost-4-ene-3,17-dione + NADPH + H(+) = 11beta,17beta-dihydroxyandrost-4-ene-3-one + NADP(+). The protein operates within hormone biosynthesis; testosterone biosynthesis. It functions in the pathway steroid metabolism. In terms of biological role, catalyzes the conversion of 17-oxosteroids to 17beta-hydroxysteroids. Favors the reduction of androstenedione to testosterone. Testosterone is the key androgen driving male development and function. Uses NADPH while the two other EDH17B enzymes use NADH. Androgens such as epiandrosterone, dehydroepiandrosterone, androsterone and androstanedione are accepted as substrates and reduced at C-17. Can reduce 11-ketoandrostenedione as well as 11beta-hydroxyandrostenedione at C-17 to the respective testosterone forms. Plays a role in the rate-limiting-step for the maximum level of testosterone production by the testis but does not affect basal testosterone production. This is 17-beta-hydroxysteroid dehydrogenase type 3 from Rattus norvegicus (Rat).